The following is a 212-amino-acid chain: ATP-dependent dethiobiotin synthetase BioD (212 aa).

Position 13 to 18 (glycine 13 to valine 18) interacts with ATP. Position 17 (threonine 17) interacts with Mg(2+). The active site involves lysine 33. A substrate-binding site is contributed by serine 37. Glutamate 100 is a binding site for Mg(2+). ATP is bound by residues glutamate 100–glycine 103, isoleucine 160–serine 161, and proline 184–leucine 186.

Belongs to the dethiobiotin synthetase family. Homodimer. Mg(2+) serves as cofactor.

It is found in the cytoplasm. The catalysed reaction is (7R,8S)-7,8-diammoniononanoate + CO2 + ATP = (4R,5S)-dethiobiotin + ADP + phosphate + 3 H(+). The protein operates within cofactor biosynthesis; biotin biosynthesis; biotin from 7,8-diaminononanoate: step 1/2. Catalyzes a mechanistically unusual reaction, the ATP-dependent insertion of CO2 between the N7 and N8 nitrogen atoms of 7,8-diaminopelargonic acid (DAPA, also called 7,8-diammoniononanoate) to form a ureido ring. In Brucella abortus (strain S19), this protein is ATP-dependent dethiobiotin synthetase BioD.